The chain runs to 199 residues: Large ribosomal subunit protein uL10 (199 aa).

Belongs to the universal ribosomal protein uL10 family. Part of the ribosomal stalk of the 50S ribosomal subunit. The N-terminus interacts with L11 and the large rRNA to form the base of the stalk. The C-terminus forms an elongated spine to which L12 dimers bind in a sequential fashion forming a multimeric L10(L12)X complex.

In terms of biological role, forms part of the ribosomal stalk, playing a central role in the interaction of the ribosome with GTP-bound translation factors. This Aquifex aeolicus (strain VF5) protein is Large ribosomal subunit protein uL10 (rplJ).